The following is a 143-amino-acid chain: Transcription antitermination protein NusB (143 aa).

It belongs to the NusB family.

Functionally, involved in transcription antitermination. Required for transcription of ribosomal RNA (rRNA) genes. Binds specifically to the boxA antiterminator sequence of the ribosomal RNA (rrn) operons. This Desulforapulum autotrophicum (strain ATCC 43914 / DSM 3382 / VKM B-1955 / HRM2) (Desulfobacterium autotrophicum) protein is Transcription antitermination protein NusB.